The primary structure comprises 342 residues: Phosphoribosylformylglycinamidine cyclo-ligase (342 aa).

This sequence belongs to the AIR synthase family.

The protein localises to the cytoplasm. It catalyses the reaction 2-formamido-N(1)-(5-O-phospho-beta-D-ribosyl)acetamidine + ATP = 5-amino-1-(5-phospho-beta-D-ribosyl)imidazole + ADP + phosphate + H(+). Its pathway is purine metabolism; IMP biosynthesis via de novo pathway; 5-amino-1-(5-phospho-D-ribosyl)imidazole from N(2)-formyl-N(1)-(5-phospho-D-ribosyl)glycinamide: step 2/2. The chain is Phosphoribosylformylglycinamidine cyclo-ligase from Staphylococcus aureus (strain MSSA476).